The following is a 354-amino-acid chain: Transcription factor BHLH3 (354 aa).

Positions 124-143 (VAEEETSGDKALLHGGGGSS) are disordered. The basic motif stretch occupies residues 178–191 (GTPSKNLMAERRRR). Residues 178–227 (GTPSKNLMAERRRRKRLNDRLSMLRSIVPKISKMDRTSILGDTIDYVKEL) form the bHLH domain. Residues 192–227 (KRLNDRLSMLRSIVPKISKMDRTSILGDTIDYVKEL) are helix-loop-helix motif.

The protein belongs to the bHLH protein family. Interacts with LAX1. Phosphorylated by MAPK3 and MAPK6.

The protein localises to the nucleus. It localises to the cytoplasm. Transcription factor involved in defense responses that functions downstream of RAC1 and upstream of PAL1 and WRKY19 genes. The chain is Transcription factor BHLH3 from Oryza sativa subsp. japonica (Rice).